The primary structure comprises 271 residues: 3-methyl-2-oxobutanoate hydroxymethyltransferase 2 (271 aa).

Mg(2+) is bound by residues Asp-53 and Asp-92. Residues 53–54 (DS), Asp-92, and Lys-120 each bind 3-methyl-2-oxobutanoate. Residue Glu-122 participates in Mg(2+) binding. The active-site Proton acceptor is the Glu-189.

This sequence belongs to the PanB family. As to quaternary structure, homodecamer; pentamer of dimers. Requires Mg(2+) as cofactor.

The protein localises to the cytoplasm. It catalyses the reaction 3-methyl-2-oxobutanoate + (6R)-5,10-methylene-5,6,7,8-tetrahydrofolate + H2O = 2-dehydropantoate + (6S)-5,6,7,8-tetrahydrofolate. It functions in the pathway cofactor biosynthesis; (R)-pantothenate biosynthesis; (R)-pantoate from 3-methyl-2-oxobutanoate: step 1/2. Its function is as follows. Catalyzes the reversible reaction in which hydroxymethyl group from 5,10-methylenetetrahydrofolate is transferred onto alpha-ketoisovalerate to form ketopantoate. The chain is 3-methyl-2-oxobutanoate hydroxymethyltransferase 2 from Burkholderia lata (strain ATCC 17760 / DSM 23089 / LMG 22485 / NCIMB 9086 / R18194 / 383).